Reading from the N-terminus, the 1429-residue chain is Nitric oxide synthase 1 (1429 aa).

Positions 1 to 200 are interaction with NOSIP; the sequence is MEENTFGVQQ…LQDIGEHDEL (200 aa). Residues 17–99 enclose the PDZ domain; the sequence is SVRLFKRKVG…ETHVVLILRG (83 aa). Disordered regions lie at residues 152–174, 214–255, and 271–298; these read VTGLGNGPQHAQGHGQGAGSVSQ, GSKA…DNDR, and NNPYSEKEQSPTSGKQSPTKNGSPSRCP. Residues 160-174 are compositionally biased toward low complexity; that stretch reads QHAQGHGQGAGSVSQ. The interval 163 to 240 is interaction with DYNLL1/PIN; the sequence is QGHGQGAGSV…TGIQVDRDLD (78 aa). Basic and acidic residues predominate over residues 226–243; that stretch reads AEMKDTGIQVDRDLDGKS. A Phosphoserine modification is found at Ser280. The segment covering 280–294 has biased composition (polar residues); the sequence is SPTSGKQSPTKNGSP. Ser334 is a (6R)-L-erythro-5,6,7,8-tetrahydrobiopterin binding site. Cys415 provides a ligand contact to heme b. L-arginine is bound by residues Gln478, Trp587, Tyr588, and Glu592. 3 residues coordinate (6R)-L-erythro-5,6,7,8-tetrahydrobiopterin: Val677, Trp678, and Phe691. Tyr706 serves as a coordination point for heme b. Positions 725–745 are calmodulin-binding; sequence KRRAIGFKKLAEAVKFSAKLM. Residues 755-935 enclose the Flavodoxin-like domain; the sequence is ATILYATETG…AFRTWAKKVF (181 aa). Residues Thr761, Glu762, Thr763, Lys765, Ser766, Ser807, Thr808, and Gly812 each coordinate FMN. Phosphoserine is present on residues Ser847, Ser857, and Ser858. The FMN site is built by Ser886, His891, Cys893, Glu919, and Gln923. Positions 990 to 1237 constitute an FAD-binding FR-type domain; the sequence is KRVSAARLLS…VRGAPSFHLP (248 aa). Residue Arg1010 participates in NADP(+) binding. The FAD site is built by His1032, Arg1173, Tyr1174, Tyr1175, Ser1176, Thr1191, and Ala1193. NADP(+) is bound at residue Ser1196. FAD-binding residues include Tyr1197, Val1210, Cys1211, and Ser1212. The NADP(+) site is built by Thr1251, Arg1284, Ser1313, Arg1314, Lys1320, Tyr1322, Gln1324, Asp1357, Thr1398, and Arg1400.

It belongs to the NOS family. As to quaternary structure, homodimer. Interacts with DLG4 (via N-terminal tandem pair of PDZ domains); the interaction possibly being prevented by the association between NOS1 and CAPON. Forms a ternary complex with CAPON and RASD1. Forms a ternary complex with CAPON and SYN1. Interacts with ZDHHC23. Interacts with NOSIP; which may impair its synaptic location. Interacts with HTR4. Interacts with SLC6A4. Interacts with VAC14. Forms a complex with ASL, ASS1 and SLC7A1; the complex regulates cell-autonomous L-arginine synthesis and citrulline recycling while channeling extracellular L-arginine to nitric oxide synthesis pathway. Interacts with DMD; localizes NOS1 to sarcolemma in muscle cells. Interacts with DYNLL1; inhibits the nitric oxide synthase activity. Requires heme b as cofactor. FAD serves as cofactor. It depends on FMN as a cofactor. (6R)-L-erythro-5,6,7,8-tetrahydrobiopterin is required as a cofactor. Ubiquitinated; mediated by STUB1/CHIP in the presence of Hsp70 and Hsp40 (in vitro). As to expression, isoform N-NOS-1 is expressed in brain and colorectum. Found in the Auerbach's plexus of the enteric nervous system. Isoform PNNOS is expressed in the penis, urethra, prostate, and skeletal muscle, and coexists with the cerebellar nnos in the pelvic plexus, bladder and liver, and is detectable in the cerebellum.

It is found in the cell membrane. The protein resides in the sarcolemma. Its subcellular location is the cell projection. It localises to the dendritic spine. It catalyses the reaction 2 L-arginine + 3 NADPH + 4 O2 + H(+) = 2 L-citrulline + 2 nitric oxide + 3 NADP(+) + 4 H2O. Stimulated by calcium/calmodulin. Inhibited by DYNLL1 that prevents the dimerization of the protein. Inhibited by NOSIP. Functionally, produces nitric oxide (NO) which is a messenger molecule with diverse functions throughout the body. In the brain and peripheral nervous system, NO displays many properties of a neurotransmitter. Inhibitory transmitter for non-adrenergic and non-cholinergic nerves in the colorectum. Probably has nitrosylase activity and mediates cysteine S-nitrosylation of cytoplasmic target proteins such SRR. Inhibitory transmitter for non-adrenergic and non-cholinergic nerves in the colorectum. This Rattus norvegicus (Rat) protein is Nitric oxide synthase 1.